A 276-amino-acid chain; its full sequence is Cell division protein FtsQ (276 aa).

Topologically, residues 1–11 (MQYILKLKYYL) are cytoplasmic. A helical membrane pass occupies residues 12-32 (YNITWKLVFICVMLVLLIVGI). The Periplasmic segment spans residues 33-276 (HKNIKWVCDY…NVSKGSHDYD (244 aa)). The POTRA domain occupies 45-115 (GPLSYIIVTG…NTLKINLIEY (71 aa)).

Belongs to the FtsQ/DivIB family. FtsQ subfamily. In terms of assembly, part of a complex composed of FtsB, FtsL and FtsQ.

Its subcellular location is the cell inner membrane. Functionally, essential cell division protein. May link together the upstream cell division proteins, which are predominantly cytoplasmic, with the downstream cell division proteins, which are predominantly periplasmic. May control correct divisome assembly. This is Cell division protein FtsQ from Blochmanniella floridana.